The primary structure comprises 369 residues: Chaperone protein DnaJ (369 aa).

A J domain is found at Asp7–Gly73. The CR-type zinc finger occupies Gly143–Lys225. The Zn(2+) site is built by Cys156, Cys159, Cys173, Cys176, Cys199, Cys202, Cys213, and Cys216. 4 CXXCXGXG motif repeats span residues Cys156–Gly163, Cys173–Gly180, Cys199–Gly206, and Cys213–Gly220.

Belongs to the DnaJ family. Homodimer. Zn(2+) is required as a cofactor.

Its subcellular location is the cytoplasm. Its function is as follows. Participates actively in the response to hyperosmotic and heat shock by preventing the aggregation of stress-denatured proteins and by disaggregating proteins, also in an autonomous, DnaK-independent fashion. Unfolded proteins bind initially to DnaJ; upon interaction with the DnaJ-bound protein, DnaK hydrolyzes its bound ATP, resulting in the formation of a stable complex. GrpE releases ADP from DnaK; ATP binding to DnaK triggers the release of the substrate protein, thus completing the reaction cycle. Several rounds of ATP-dependent interactions between DnaJ, DnaK and GrpE are required for fully efficient folding. Also involved, together with DnaK and GrpE, in the DNA replication of plasmids through activation of initiation proteins. The sequence is that of Chaperone protein DnaJ from Thermotoga petrophila (strain ATCC BAA-488 / DSM 13995 / JCM 10881 / RKU-1).